The following is a 163-amino-acid chain: Cyclic pyranopterin monophosphate synthase (163 aa).

Substrate contacts are provided by residues 75-77 and 115-116; these read MCH and ME. The active site involves Asp130.

Belongs to the MoaC family. Homohexamer; trimer of dimers.

It carries out the reaction (8S)-3',8-cyclo-7,8-dihydroguanosine 5'-triphosphate = cyclic pyranopterin phosphate + diphosphate. It participates in cofactor biosynthesis; molybdopterin biosynthesis. Functionally, catalyzes the conversion of (8S)-3',8-cyclo-7,8-dihydroguanosine 5'-triphosphate to cyclic pyranopterin monophosphate (cPMP). The chain is Cyclic pyranopterin monophosphate synthase from Bacillus pumilus (strain SAFR-032).